Consider the following 200-residue polypeptide: Dephospho-CoA kinase (200 aa).

Positions 4-200 constitute a DPCK domain; the sequence is VIGLTGGIGS…QKYIKMSHLY (197 aa). ATP is bound at residue 12–17; it reads GSGKTT.

This sequence belongs to the CoaE family.

It localises to the cytoplasm. The catalysed reaction is 3'-dephospho-CoA + ATP = ADP + CoA + H(+). Its pathway is cofactor biosynthesis; coenzyme A biosynthesis; CoA from (R)-pantothenate: step 5/5. Functionally, catalyzes the phosphorylation of the 3'-hydroxyl group of dephosphocoenzyme A to form coenzyme A. This is Dephospho-CoA kinase from Photobacterium profundum (strain SS9).